The sequence spans 193 residues: Chaperone protein TorD (193 aa).

This sequence belongs to the TorD/DmsD family. TorD subfamily.

It is found in the cytoplasm. Its function is as follows. Involved in the biogenesis of TorA. Acts on TorA before the insertion of the molybdenum cofactor and, as a result, probably favors a conformation of the apoenzyme that is competent for acquiring the cofactor. This Actinobacillus succinogenes (strain ATCC 55618 / DSM 22257 / CCUG 43843 / 130Z) protein is Chaperone protein TorD.